The chain runs to 272 residues: 3-methyl-2-oxobutanoate hydroxymethyltransferase (272 aa).

The Mg(2+) site is built by Asp52 and Asp91. Residues 52–53 (DS), Asp91, and Lys121 each bind 3-methyl-2-oxobutanoate. Glu123 serves as a coordination point for Mg(2+). The Proton acceptor role is filled by Glu190.

The protein belongs to the PanB family. Homodecamer; pentamer of dimers. Mg(2+) serves as cofactor.

It is found in the cytoplasm. The enzyme catalyses 3-methyl-2-oxobutanoate + (6R)-5,10-methylene-5,6,7,8-tetrahydrofolate + H2O = 2-dehydropantoate + (6S)-5,6,7,8-tetrahydrofolate. It participates in cofactor biosynthesis; (R)-pantothenate biosynthesis; (R)-pantoate from 3-methyl-2-oxobutanoate: step 1/2. Catalyzes the reversible reaction in which hydroxymethyl group from 5,10-methylenetetrahydrofolate is transferred onto alpha-ketoisovalerate to form ketopantoate. The sequence is that of 3-methyl-2-oxobutanoate hydroxymethyltransferase from Christiangramia forsetii (strain DSM 17595 / CGMCC 1.15422 / KT0803) (Gramella forsetii).